A 623-amino-acid polypeptide reads, in one-letter code: (-)-limonene synthase TPS1, chloroplastic (623 aa).

A chloroplast-targeting transit peptide spans 1-60; sequence MQCIAFHQFASSSSLPIWSSIDNRFTPKTSITSISKPKPKLKSKSNLKSRSRSSTCYPIQ. Positions 29-52 are disordered; it reads TSITSISKPKPKLKSKSNLKSRSR. Basic residues predominate over residues 37–51; it reads PKPKLKSKSNLKSRS. Residues Arg-337, Asp-374, Asp-378, Arg-516, and Asp-519 each contribute to the (2E)-geranyl diphosphate site. Mg(2+)-binding residues include Asp-374 and Asp-378. The short motif at 374–378 is the DDXXD motif element; it reads DDMHD. 3 residues coordinate Mg(2+): Asp-519, Thr-523, and Glu-527.

It belongs to the terpene synthase family. Tpsb subfamily. Mg(2+) serves as cofactor. It depends on Mn(2+) as a cofactor. K(+) is required as a cofactor. In terms of tissue distribution, trichome.

It localises to the plastid. Its subcellular location is the chloroplast. It carries out the reaction (2E)-geranyl diphosphate = (4S)-limonene + diphosphate. The catalysed reaction is (2E)-geranyl diphosphate = terpinolene + diphosphate. It catalyses the reaction (2E)-geranyl diphosphate = (1R,5R)-alpha-pinene + diphosphate. The enzyme catalyses (2E)-geranyl diphosphate = (1R,5R)-beta-pinene + diphosphate. It carries out the reaction (2E)-geranyl diphosphate = beta-myrcene + diphosphate. The catalysed reaction is (2E)-geranyl diphosphate = (4R)-limonene + diphosphate. It participates in secondary metabolite biosynthesis; terpenoid biosynthesis. It functions in the pathway terpene metabolism; (4S)-limonene biosynthesis; (4S)-limonene from geranyl diphosphate: step 1/1. In terms of biological role, involved in monoterpene (C10) olefins biosynthesis, constituants of cannabinoids and terpenoids-rich resins. Catalyzes mainly the conversion of (2E)-geranyl diphosphate to (-)-limonene, and also produces minor products such as (+)-limonene, (+)-alpha-pinene, terpinolene, (+)-beta-pinene and beta-myrcene. In Cannabis sativa (Hemp), this protein is (-)-limonene synthase TPS1, chloroplastic.